The primary structure comprises 269 residues: Formamidopyrimidine-DNA glycosylase (269 aa).

The active-site Schiff-base intermediate with DNA is the proline 2. Glutamate 3 acts as the Proton donor in catalysis. Residue lysine 57 is the Proton donor; for beta-elimination activity of the active site. Histidine 90, arginine 109, and lysine 150 together coordinate DNA. An FPG-type zinc finger spans residues 235 to 269; sequence QVYGRKGEPCRVCGTPIAATKHAQRATFYCRHCQK. Residue arginine 259 is the Proton donor; for delta-elimination activity of the active site.

Belongs to the FPG family. Monomer. It depends on Zn(2+) as a cofactor.

The enzyme catalyses Hydrolysis of DNA containing ring-opened 7-methylguanine residues, releasing 2,6-diamino-4-hydroxy-5-(N-methyl)formamidopyrimidine.. It carries out the reaction 2'-deoxyribonucleotide-(2'-deoxyribose 5'-phosphate)-2'-deoxyribonucleotide-DNA = a 3'-end 2'-deoxyribonucleotide-(2,3-dehydro-2,3-deoxyribose 5'-phosphate)-DNA + a 5'-end 5'-phospho-2'-deoxyribonucleoside-DNA + H(+). Its function is as follows. Involved in base excision repair of DNA damaged by oxidation or by mutagenic agents. Acts as a DNA glycosylase that recognizes and removes damaged bases. Has a preference for oxidized purines, such as 7,8-dihydro-8-oxoguanine (8-oxoG). Has AP (apurinic/apyrimidinic) lyase activity and introduces nicks in the DNA strand. Cleaves the DNA backbone by beta-delta elimination to generate a single-strand break at the site of the removed base with both 3'- and 5'-phosphates. The protein is Formamidopyrimidine-DNA glycosylase of Salmonella paratyphi B (strain ATCC BAA-1250 / SPB7).